The sequence spans 356 residues: UDP-N-acetylglucosamine--N-acetylmuramyl-(pentapeptide) pyrophosphoryl-undecaprenol N-acetylglucosamine transferase (356 aa).

Residues Ser-198 and Gln-289 each coordinate UDP-N-acetyl-alpha-D-glucosamine.

It belongs to the glycosyltransferase 28 family. MurG subfamily.

It is found in the cell membrane. It catalyses the reaction Mur2Ac(oyl-L-Ala-gamma-D-Glu-L-Lys-D-Ala-D-Ala)-di-trans,octa-cis-undecaprenyl diphosphate + UDP-N-acetyl-alpha-D-glucosamine = beta-D-GlcNAc-(1-&gt;4)-Mur2Ac(oyl-L-Ala-gamma-D-Glu-L-Lys-D-Ala-D-Ala)-di-trans,octa-cis-undecaprenyl diphosphate + UDP + H(+). Its pathway is cell wall biogenesis; peptidoglycan biosynthesis. Cell wall formation. Catalyzes the transfer of a GlcNAc subunit on undecaprenyl-pyrophosphoryl-MurNAc-pentapeptide (lipid intermediate I) to form undecaprenyl-pyrophosphoryl-MurNAc-(pentapeptide)GlcNAc (lipid intermediate II). In Streptococcus thermophilus (strain ATCC BAA-491 / LMD-9), this protein is UDP-N-acetylglucosamine--N-acetylmuramyl-(pentapeptide) pyrophosphoryl-undecaprenol N-acetylglucosamine transferase.